A 138-amino-acid chain; its full sequence is Superoxide dismutase [Mn] (138 aa).

Mn(2+) is bound by residues histidine 1, histidine 49, aspartate 133, and histidine 137.

The protein belongs to the iron/manganese superoxide dismutase family. The cofactor is Mn(2+).

It carries out the reaction 2 superoxide + 2 H(+) = H2O2 + O2. In terms of biological role, destroys superoxide anion radicals which are normally produced within the cells and which are toxic to biological systems. This is Superoxide dismutase [Mn] (sodA) from Mycobacterium celatum.